The primary structure comprises 156 residues: Small ribosomal subunit protein uS7 (156 aa).

The protein belongs to the universal ribosomal protein uS7 family. Part of the 30S ribosomal subunit. Contacts proteins S9 and S11.

Functionally, one of the primary rRNA binding proteins, it binds directly to 16S rRNA where it nucleates assembly of the head domain of the 30S subunit. Is located at the subunit interface close to the decoding center, probably blocks exit of the E-site tRNA. This is Small ribosomal subunit protein uS7 from Psychromonas ingrahamii (strain DSM 17664 / CCUG 51855 / 37).